The chain runs to 1137 residues: DENN domain-containing protein 2B (1137 aa).

A compositionally biased stretch (polar residues) spans 1 to 12; sequence MTMTANKNSSIT. The segment at 1 to 99 is disordered; it reads MTMTANKNSS…PTCPFKTASF (99 aa). 2 positions are modified to phosphoserine: S30 and S32. Over residues 32 to 43 the composition is skewed to pro residues; sequence SPPPVLSPPRSP. Polar residues predominate over residues 49 to 64; sequence DSETSACRYPSHSSSR. Residues 73–92 are compositionally biased toward pro residues; it reads PAPSPQNPQDPSPDTSPPTC. T231 bears the Phosphothreonine mark. S233 is modified (phosphoserine). Residues 293-573 form a disordered region; sequence KEQPGRGLPQ…HRLPRLPKRH (281 aa). The segment covering 324 to 348 has biased composition (low complexity); it reads EEPAGGASVSAGSRAVGVAGVAGEA. T364 is modified (phosphothreonine). The residue at position 368 (S368) is a Phosphoserine. Low complexity predominate over residues 368–380; sequence SPSSQRLPSKSSL. The span at 392–402 shows a compositional bias: basic and acidic residues; that stretch reads RTFEYEADKNP. Residues 401–447 form an interaction with ABL1 region; the sequence is NPKSKPSNGLPPSPTPAAPPPLPSTPAPPVTRRPKKDMRGHRKSQSR. Residues 409–431 show a composition bias toward pro residues; sequence GLPPSPTPAAPPPLPSTPAPPVT. Residues 432 to 446 show a composition bias toward basic residues; the sequence is RRPKKDMRGHRKSQS. Polar residues predominate over residues 456 to 481; the sequence is SSLQSLYPSSPTENGTENQPKFGSKS. T482 bears the Phosphothreonine mark. Residues 495–508 show a composition bias toward basic and acidic residues; sequence LPKENPYEDVDLKS. Composition is skewed to polar residues over residues 514–524 and 539–558; these read KSQQLSENSLD and SPPTQLSLKPNSQSLRSGNW. S545 is modified (phosphoserine). Residues 562–573 show a composition bias toward basic residues; sequence KSHRLPRLPKRH. Phosphoserine is present on residues S574 and S622. The tract at residues 641–661 is disordered; the sequence is IETASLRDENSESESDSDDRF. The region spanning 698 to 846 is the uDENN domain; sequence EYFVVVSLKK…PFPAPGKTIK (149 aa). In terms of domain architecture, cDENN spans 868–1001; sequence RLEHVDFECL…LQAALEQALE (134 aa). A dDENN domain is found at 1003–1096; it reads KNELISQDSD…QDRELRKCRA (94 aa).

As to quaternary structure, interacts with ITSN1 and GRB2. Isoform 1 interacts with the SH3 domain of ABL1. Post-translationally, phosphorylated. Phosphorylation decreases ITSN1 binding. Widely expressed with the exception of peripheral blood lymphocytes. Isoform 1 is expressed in several epithelial and fibroblast (including tumorigenic) but absent in lymphoid cell lines (at protein level). Isoform 3 is expressed in primary cell or weakly tumorigenic but not in tumorigenic cell lines (at protein level).

It is found in the cytoplasm. It localises to the cell cortex. The protein localises to the cell membrane. Its subcellular location is the recycling endosome. In terms of biological role, may be involved in cytoskeletal organization and tumorogenicity. Seems to be involved in a signaling transduction pathway leading to activation of MAPK1/ERK2. Plays a role in EGFR trafficking from recycling endosomes back to the cell membrane. Its function is as follows. Guanine nucleotide exchange factor (GEF) which may activate RAB9A and RAB9B. Promotes the exchange of GDP to GTP, converting inactive GDP-bound Rab proteins into their active GTP-bound form. May block ERK2 activation stimulated by ABL1. May alter cell morphology and cell growth. The chain is DENN domain-containing protein 2B from Homo sapiens (Human).